The sequence spans 1535 residues: Protein artichoke (1535 aa).

The signal sequence occupies residues 1-19 (MMLLPIFLLLCIGINLIRA). 34 LRR repeats span residues 64-87 (KGRIDELVLENNQLPALPGRFFGS), 89-110 (QIVRLMLRHNSIERVSNGWLNE), 112-135 (ENGLVEIFVVEPQLRSIPAESLNG), 136-157 (MINMLAITIQSEELKHLPDFSG), 158-181 (LLSLTYLSVQTGALQELPSHLFRH), 183-206 (PKLQHIHITGGSGLTRLEAGLFDG), 207-230 (LISLKNLDLSHNGLNWIHLRALSR), 231-256 (LPNLVSLKLSHNQISDVGMVGRIVKD), 257-280 (LEHLKKLRLDNNLITVIEDGSFVD), 281-304 (LPNLSELHLNDNRITELQYGAFLR), 306-328 (PQLKTIYLQNNLIRRIHPESLLQ), 331-356 (GSGVEAVHMYNNEIGHVEALRALLDA), 357-380 (LPRLRYLDMSGNLLSELPYGALRG), 382-404 (GTLEQLHLNHNHLRLIERDALMA), 406-429 (PALRELRMRNNSLSSDLPLPFWNL), 430-452 (PGLKGLDLAQNQFARVDSQLLAG), 453-476 (LPSLRRLDLSENGLIELAPNSFRH), 478-500 (PLLETLNISSNELTKIHSSTLIH), 521-545 (LPRIVERISLKGNQITSLPAAASKD), 548-571 (LPNLRMLDLSQNRIEQLPRHGFQG), 573-595 (MELRVLSLAQNELRQLKDTSFIG), 597-619 (QRLELLHLQENQLGEADERALLP), 620-643 (LAELRNLNLQSNKLEAITDNFFSN), 645-667 (SRLEQLDLSRNLIRSISPTAFDT), 669-691 (RSLEYLDLSGNALLDISVGLGNL), 692-714 (NNLRDIDLSYNQISRIQSDVIGG), 716-738 (RNVVEIRLSNNLIVELQQGTFRN), 739-762 (LPKLQYLDLSSNEIRNVEPGALKG), 764-786 (DELQEFVLADNKLVELKDHVFEE), 788-810 (PSLLASHFQYNKLRYISPESFHN), 811-834 (ANSLVFLNLSNNHFRNMENIGLRS), 835-858 (MRNLEVLDLSTNGVKLVSTMPLKA), 860-882 (NWLVELKMDNNQICRIQGSPFET), and 883-906 (MPRLRVLSMRNNQLRSIKERTFRN). One can recognise an LRRCT domain in the interval 919–963 (NPIDCNCEMQWLSVWLQETNFPYPGPKCQDGRLLRSARMERSLCV). Disordered regions lie at residues 1036–1055 (HSAISTSQRPKPTPTINSNI), 1253–1331 (TQAR…DSQY), 1377–1416 (VTTTTPQSPSDNQVTLAGPTSTVPPPPPASPPLRGGGRST), and 1429–1449 (AQPTAEEYQRTTPSGDNEGVA). Polar residues predominate over residues 1253–1270 (TQARPKPTKSSGESSETA). 2 stretches are compositionally biased toward low complexity: residues 1271–1285 (TYEVTETTPDITTTT) and 1293–1315 (TSTTKASTTTTRSTTTTSTTQVT). Composition is skewed to polar residues over residues 1316 to 1328 (PAENNASSSTELD) and 1377 to 1391 (VTTTTPQSPSDNQVT). Positions 1398–1407 (TVPPPPPASP) are enriched in pro residues.

Its subcellular location is the secreted. The protein resides in the extracellular space. It is found in the extracellular matrix. It localises to the cytoplasm. Functionally, required for normal morphology and function of ciliated sensory organs. In Drosophila melanogaster (Fruit fly), this protein is Protein artichoke.